A 394-amino-acid chain; its full sequence is Envelope glycoprotein D (394 aa).

The first 25 residues, 1 to 25 (MGGAAARLGAVILFVVIVGLHGVRS), serve as a signal peptide directing secretion. The interval 26–57 (KYALVDASLKMADPNRFRGKDLPVLDQLTDPP) is interaction with TNFRSF14. Residues 26 to 340 (KYALVDASLK…YHPPATPNNM (315 aa)) are Virion surface-facing. Histidine 64 provides a ligand contact to Zn(2+). Disulfide bonds link cysteine 91–cysteine 214, cysteine 131–cysteine 227, and cysteine 143–cysteine 152. Residues asparagine 119 and asparagine 146 are each glycosylated (N-linked (GlcNAc...) asparagine; by host). Aspartate 240 contributes to the Zn(2+) binding site. The profusion stretch occupies residues 261-305 (LKIAGWHGPKAPYTSTLLPPELSETPNATQPELAPEDPEDSALLE). A disordered region spans residues 275-301 (STLLPPELSETPNATQPELAPEDPEDS). Asparagine 287 carries N-linked (GlcNAc...) asparagine; by host glycosylation. A helical transmembrane segment spans residues 341–361 (GLIAGAVGGSLLAALVICGIV). At 362-394 (YWMRRHTQKAPKRIRLPHIREDDQPSSHQPLFY) the chain is on the intravirion side. The segment at 375-394 (IRLPHIREDDQPSSHQPLFY) is disordered.

Belongs to the herpesviridae glycoprotein D family. Homodimer. Interacts with host receptor TNFRSF14. Interacts with host receptor NECTIN1. Interacts (via profusion domain) with gB; this interaction occurs in the absence of gH/gL. Interacts (via profusion domain) with gH/gL heterodimer; this interaction occurs in the absence of gB. Associates with the gB-gH/gL-gD complex. Interacts (via C-terminus) with UL11 tegument protein. Interacts (via C-terminus) with VP22 tegument protein; this interaction has been demonstrated in other strains, but might be very weak since PubMed:19279114 has failed to see it. Interacts with host RSAD2.

Its subcellular location is the virion membrane. It is found in the host Golgi apparatus. Its function is as follows. Envelope glycoprotein that binds to the host cell entry receptors NECTIN1, TNFRSF14/HVEM and 3-O-sulfated heparan sulfate, promoting the virus entry into host cells. May trigger fusion with host membrane, by recruiting the fusion machinery composed of gB and gH/gL. The sequence is that of Envelope glycoprotein D (gD) from Homo sapiens (Human).